The primary structure comprises 121 residues: Protein yippee-like 5 (121 aa).

The region spanning 13–110 (RLFSCANCDT…LERALVRESE (98 aa)) is the Yippee domain. Zn(2+) contacts are provided by cysteine 17, cysteine 20, cysteine 73, and cysteine 76. Phosphoserine is present on serine 118.

It belongs to the yippee family. As to quaternary structure, identified in the CTLH complex that contains GID4, RANBP9 and/or RANBP10, MKLN1, MAEA, RMND5A (or alternatively its paralog RMND5B), GID8, ARMC8, WDR26 and YPEL5. Within this complex, MAEA, RMND5A (or alternatively its paralog RMND5B), GID8, WDR26, and RANBP9 and/or RANBP10 form the catalytic core, while GID4, MKLN1, ARMC8 and YPEL5 have ancillary roles. Interacts with RANBP9 and RANBP10.

It is found in the nucleus. The protein resides in the cytoplasm. It localises to the cytoskeleton. The protein localises to the microtubule organizing center. Its subcellular location is the centrosome. It is found in the spindle pole. The protein resides in the midbody. In terms of biological role, component of the CTLH E3 ubiquitin-protein ligase complex that selectively accepts ubiquitin from UBE2H and mediates ubiquitination and subsequent proteasomal degradation of the transcription factor HBP1. Required for normal cell proliferation. The polypeptide is Protein yippee-like 5 (YPEL5) (Bos taurus (Bovine)).